Consider the following 249-residue polypeptide: Meiotic drive suppressor wtf25 (249 aa).

Residues Met1–Gly40 form a disordered region. Positions Lys19–Pro30 are enriched in basic and acidic residues. A run of 4 helical transmembrane segments spans residues Leu73–Cys93, Trp110–Phe130, Asn151–Glu170, and Ser187–Val207.

This sequence belongs to the WTF family. In terms of assembly, homomer. Interacts with other proteins that exhibit high sequence similarity.

The protein localises to the spore membrane. It localises to the vacuole membrane. Acts as a suppressor component of the dual wtf meiotic drive system, and can suppress but not confer meiotic drive by compatible poisons. Wtf meiotic drive systems promote unequal transmission of alleles from the parental zygote to progeny spores by encoding a poison and an antidote from the same locus; the poison is trans-acting and forms toxic aggregates in all spores within an ascus, wherease the antidote is spore-specific and targets aggregates for degradation by the vacuole. Meiotic drive by wtf systems therefore lead to poisoning of all progeny that do not inherit the dual poison/antidote allele, or express a compatible antidote. This chain is Meiotic drive suppressor wtf25, found in Schizosaccharomyces pombe (strain 972 / ATCC 24843) (Fission yeast).